Here is a 297-residue protein sequence, read N- to C-terminus: Protein COFACTOR ASSEMBLY OF COMPLEX C SUBUNIT B CCB4, chloroplastic (297 aa).

The transit peptide at 1 to 33 (MEARIILLRIQIPWSANRQFSHPPLDFPRFIRA) directs the protein to the chloroplast. Topologically, residues 34–70 (SSSSTSQKPKTYEGPKPRKNLVADFISKNDDLVRSLP) are stromal. The helical transmembrane segment at 71–91 (IYVGGASLLAVLFNRTVSGIA) threads the bilayer. At 92-103 (PVADASSSQSRA) the chain is on the lumenal side. Residues 104-124 (DLLALGLAVTNLLTGLVWLSI) traverse the membrane as a helical segment. Residues 125–297 (RPKSITPVNP…DSDEISRVTV (173 aa)) are Stromal-facing.

It is found in the plastid. The protein localises to the chloroplast thylakoid membrane. Functionally, required for the biogenesis and accumulation of native cytochrome b6 in the thylakoid membrane. Controls the conversion of apocytochrome b6 to holocytochrome b6. Required for covalent binding of the c-type heme to cytochrome b6. This chain is Protein COFACTOR ASSEMBLY OF COMPLEX C SUBUNIT B CCB4, chloroplastic, found in Arabidopsis thaliana (Mouse-ear cress).